A 1007-amino-acid chain; its full sequence is MSRRKQRKPQQLISDCEGPSASENGDASEEDHPQVCAKCCAQFTDPTEFLAHQNACSTDPPVMVIIGGQENPNNSSASSEPRPEGHNNPQVMDTEHSNPPDSGSSVPTDPTWGPERRGEESSGHFLVAATGTAAGGGGGLILASPKLGATPLPPESTPAPPPPPPPPPPPGVGSGHLNIPLILEELRVLQQRQIHQMQMTEQICRQVLLLGSLGQTVGAPASPSELPGTGTASSTKPLLPLFSPIKPVQTSKTLASSSSSSSSSSGAETPKQAFFHLYHPLGSQHPFSAGGVGRSHKPTPAPSPALPGSTDQLIASPHLAFPSTTGLLAAQCLGAARGLEATASPGLLKPKNGSGELSYGEVMGPLEKPGGRHKCRFCAKVFGSDSALQIHLRSHTGERPYKCNVCGNRFTTRGNLKVHFHRHREKYPHVQMNPHPVPEHLDYVITSSGLPYGMSVPPEKAEEEAATPGGGVERKPLVASTTALSATESLTLLSTSAGTATAPGLPAFNKFVLMKAVEPKNKADENTPPGSEGSAISGVAESSTATRMQLSKLVTSLPSWALLTNHFKSTGSFPFPYVLEPLGASPSETSKLQQLVEKIDRQGAVAVTSAASGAPTTSAPAPSSSASSGPNQCVICLRVLSCPRALRLHYGQHGGERPFKCKVCGRAFSTRGNLRAHFVGHKASPAARAQNSCPICQKKFTNAVTLQQHVRMHLGGQIPNGGTALPEGGGAAQENGSEQSTVSGARSFPQQQSQQPSPEEELSEEEEEEDEEEEEDVTDEDSLAGRGSESGGEKAISVRGDSEEASGAEEEVGTVAAAATAGKEMDSNEKTTQQSSLPPPPPPDSLDQPQPMEQGSSGVLGGKEEGGKPERSSSPASALTPEGEATSVTLVEELSLQEAMRKEPGESSSRKACEVCGQAFPSQAALEEHQKTHPKEGPLFTCVFCRQGFLERATLKKHMLLAHHQVQPFAPHGPQNIAALSLVPGCSPSITSTGLSPFPRKDDPTIP.

Residues 1 to 33 (MSRRKQRKPQQLISDCEGPSASENGDASEEDHP) form a disordered region. The C2H2-type 1; atypical zinc finger occupies 34-56 (QVCAKCCAQFTDPTEFLAHQNAC). 4 disordered regions span residues 59–121 (DPPV…GEES), 137–177 (GGGL…SGHL), 220–243 (PASP…PLFS), and 286–306 (PFSA…SPAL). The span at 70–80 (ENPNNSSASSE) shows a compositional bias: low complexity. A compositionally biased stretch (polar residues) spans 99-108 (PPDSGSSVPT). The span at 151–171 (PLPPESTPAPPPPPPPPPPPG) shows a compositional bias: pro residues. Phosphoserine is present on Ser243. 2 C2H2-type zinc fingers span residues 373–395 (HKCR…LRSH) and 401–423 (YKCN…FHRH). Disordered regions lie at residues 520-540 (KNKA…SGVA) and 610-629 (AASG…ASSG). 3 C2H2-type zinc fingers span residues 631–653 (NQCV…YGQH), 659–681 (FKCK…FVGH), and 691–713 (NSCP…VRMH). The segment at 714–886 (LGGQIPNGGT…SALTPEGEAT (173 aa)) is disordered. Polar residues predominate over residues 734–744 (ENGSEQSTVSG). Low complexity predominate over residues 747–757 (SFPQQQSQQPS). A compositionally biased stretch (acidic residues) spans 758-782 (PEEELSEEEEEEDEEEEEDVTDEDS). 3 positions are modified to phosphoserine: Ser797, Ser802, and Ser806. The span at 803–812 (EEASGAEEEV) shows a compositional bias: acidic residues. Over residues 862 to 871 (GKEEGGKPER) the composition is skewed to basic and acidic residues. Residue Lys911 forms a Glycyl lysine isopeptide (Lys-Gly) (interchain with G-Cter in ubiquitin) linkage. 2 consecutive C2H2-type zinc fingers follow at residues 911-933 (KACE…QKTH) and 940-963 (FTCV…LLAH).

This sequence belongs to the sal C2H2-type zinc-finger protein family. Highest levels in adult brain (in different areas). Lower levels in heart; very low levels in kidney and pancreas. Expressed throughout the retina and lens vesicle as well as the periocular mesenchyme.

The protein localises to the nucleus. Its function is as follows. Probable transcription factor that plays a role in eye development before, during, and after optic fissure closure. The sequence is that of Sal-like protein 2 (SALL2) from Homo sapiens (Human).